Here is a 129-residue protein sequence, read N- to C-terminus: Small ribosomal subunit protein uS11 (129 aa).

This sequence belongs to the universal ribosomal protein uS11 family. As to quaternary structure, part of the 30S ribosomal subunit. Interacts with proteins S7 and S18. Binds to IF-3.

Its function is as follows. Located on the platform of the 30S subunit, it bridges several disparate RNA helices of the 16S rRNA. Forms part of the Shine-Dalgarno cleft in the 70S ribosome. The chain is Small ribosomal subunit protein uS11 from Symbiobacterium thermophilum (strain DSM 24528 / JCM 14929 / IAM 14863 / T).